Here is a 283-residue protein sequence, read N- to C-terminus: MAESVAHPSVLNATEEDIKQLLAASCHIGSKNLDVRMENYVWKRRADGVNIINIGKTWEKIVLAARVIATIENPADVCVISARPYGHRAVLKFAAHTGATAIAGRFTPGNFTNYITRTYREPRLIVVTDPRADHQAIKEASYVNIPVIALCDTDSPLAHVDIAIPTNNKGYKSIGLVWWLLAREVLRLRGALSRTAPWDIMVDMYFYRDPEAEREEEAKAVEAEAEAPAVEAAEFEPTAEGAVDPSILAAATAGQVGQSAWDEEGDWNTTGAAQTSDWANTVA.

The tract at residues 254–283 (GQVGQSAWDEEGDWNTTGAAQTSDWANTVA) is disordered. Polar residues predominate over residues 267-283 (WNTTGAAQTSDWANTVA).

It belongs to the universal ribosomal protein uS2 family. In terms of assembly, component of the small ribosomal subunit. Mature ribosomes consist of a small (40S) and a large (60S) subunit. The 40S subunit contains about 33 different proteins and 1 molecule of RNA (18S). The 60S subunit contains about 49 different proteins and 3 molecules of RNA (25S, 5.8S and 5S). Interacts with rps21.

The protein localises to the cytoplasm. Functionally, required for the assembly and/or stability of the 40S ribosomal subunit. Required for the processing of the 20S rRNA-precursor to mature 18S rRNA in a late step of the maturation of 40S ribosomal subunits. This Schizosaccharomyces japonicus (strain yFS275 / FY16936) (Fission yeast) protein is Small ribosomal subunit protein uS2B (rps0b).